The chain runs to 417 residues: Methyltransferase/ribosomally synthesized cyclic peptide dendrothelin A precursor dbihMA (417 aa).

A methyltransferase domain region spans residues 1 to 251 (MESSTQTKPG…GVSTFYIPPK (251 aa)). Residues arginine 72, tyrosine 76, and tyrosine 98 contribute to the active site. S-adenosyl-L-methionine-binding residues include tyrosine 98, histidine 100, valine 103, alanine 130, glutamine 172, alanine 213, serine 244, and threonine 245. Residues 252–378 (ARKDINTDII…WAIRCAMKNM (127 aa)) form a clasp domain region. The segment at 379-399 (PSSLLEAASQSVEEASMNGFP) is precursor leader. Valine 401 and valine 403 each carry N-methylvaline. N-methylthreonine is present on threonine 404. The residue at position 405 (glycine 405) is an N-methylglycine. Isoleucine 406 bears the N-methylisoleucine mark. Residue valine 407 is modified to N-methylvaline. Glycine 408 carries the N-methylglycine modification. Position 410 is an N-methylisoleucine (isoleucine 410). Residue glycine 411 is modified to N-methylglycine. At valine 413 the chain carries N-methylvaline.

This sequence in the N-terminal section; belongs to the precorrin methyltransferase family. Homodimer. Post-translationally, dbiMA automethylates at Val-401, Val-403, Thr-404, Gly-405, Ile-406, Val-407, Gly-408, Ile-410, Gly-411 and Val-413 before being processed by the prolyloligopeptidase dbiP which likely forms a peptidyl ester upon removal of the follower propeptide, which then undergoes macrocyclization with the N-terminus of the modified core peptide. Peptide backbone alpha-N-methylations change the physicochemical properties of amide bonds to provide structural constraints and other favorable characteristics including biological membrane permeability to peptides.

The protein operates within mycotoxin biosynthesis. Functionally, fusion protein of the methyltransferase dbiM and the dendrothelin core peptide; part of the gene cluster that mediates the biosynthesis of dendrothelin A, a highly methylated cyclic dodecapeptide showing slight nematodicidal activity. Dendrothelin A derives from the C-terminus of the dbiMA protein, and it is the dbiMA protein that methylates its own C-terminus using S-adenosyl methionine (SAM). The C-terminus is subsequently cleaved off and macrocyclized by the prolyloligopeptidase dbiP to give the final product. This is Methyltransferase/ribosomally synthesized cyclic peptide dendrothelin A precursor dbihMA from Dendrothele bispora (strain CBS 962.96).